The sequence spans 183 residues: NADH-ubiquinone oxidoreductase 20.8 kDa subunit (183 aa).

CHCH domains are found at residues 44-87 (GARC…IADI) and 88-130 (NKSC…LGLK). Short sequence motifs (cx9C motif) lie at residues 47–57 (CRDYNDDFMQC), 69–79 (CLKEGRRVTRC), 91–101 (CLEEFRKHWTC), and 112–122 (CRPAEWKLNKC). Cystine bridges form between C47/C79, C57/C69, C91/C122, and C101/C112. The tract at residues 161–183 (EPFVPPTQTGDNNKAPAAASSSS) is disordered.

This sequence belongs to the complex I NDUFA8 subunit family. Complex I is composed of about 40 different subunits. This is a component of the hydrophobic fraction. It depends on iron-sulfur cluster as a cofactor.

The protein resides in the mitochondrion inner membrane. In terms of biological role, accessory subunit of the mitochondrial membrane respiratory chain NADH dehydrogenase (Complex I), that is believed not to be involved in catalysis. Complex I functions in the transfer of electrons from NADH to the respiratory chain. The immediate electron acceptor for the enzyme is believed to be ubiquinone. The chain is NADH-ubiquinone oxidoreductase 20.8 kDa subunit from Neurospora crassa (strain ATCC 24698 / 74-OR23-1A / CBS 708.71 / DSM 1257 / FGSC 987).